Consider the following 305-residue polypeptide: Sulfate adenylyltransferase subunit 2 (305 aa).

Belongs to the PAPS reductase family. CysD subfamily. As to quaternary structure, heterodimer composed of CysD, the smaller subunit, and CysN.

It catalyses the reaction sulfate + ATP + H(+) = adenosine 5'-phosphosulfate + diphosphate. Its pathway is sulfur metabolism; hydrogen sulfide biosynthesis; sulfite from sulfate: step 1/3. In terms of biological role, with CysN forms the ATP sulfurylase (ATPS) that catalyzes the adenylation of sulfate producing adenosine 5'-phosphosulfate (APS) and diphosphate, the first enzymatic step in sulfur assimilation pathway. APS synthesis involves the formation of a high-energy phosphoric-sulfuric acid anhydride bond driven by GTP hydrolysis by CysN coupled to ATP hydrolysis by CysD. The chain is Sulfate adenylyltransferase subunit 2 from Pseudomonas aeruginosa (strain LESB58).